The chain runs to 55 residues: Lantibiotic epilancin (55 aa).

A propeptide spans 1–24 (MNNSLFDLNLNKGVETQKSDLSPQ) (cleaved by ElxP). Position 25 is a D-lactate; by the dehydratase ElxB and the dehydrogenase ElxO (Ser-25). Ser-27 is modified (2,3-didehydroalanine (Ser); by the dehydratase ElxB). Thr-31 carries the 2,3-didehydrobutyrine; by the dehydratase ElxB modification. Ser-32 is modified (2,3-didehydroalanine (Ser); by the dehydratase ElxB). Positions 36–40 (SKKYC) form a cross-link, lanthionine (Ser-Cys); by the dehydratase ElxB and the cyclase ElxC. Cross-links (beta-methyllanthionine (Thr-Cys); by the dehydratase ElxB and the cyclase ElxC) lie at residues 44-47 (TLTC) and 46-49 (TCGC). 2,3-didehydrobutyrine; by the dehydratase ElxB is present on Thr-52.

Belongs to the type A lantibiotic family. Post-translationally, maturation of this lantibiotic involves the enzymatic conversion of Thr, and Ser into dehydrated AA by ElxB and the formation of thioether bonds with cysteine by the cyclase ElxC. The next steps are cleavage of the leader peptide by ElxP and membrane translocation by ElxT. The leader peptide may be removed before membrane translocation, in contrast to other lantibiotics for which the cleavage occur after translocation. This is suggested by the probable cytoplasmic localization of the serine protease ElxP that cleaves the leader peptide. It is not established whether the 2,3-didehydrobutyrine is the E- or Z-isomer. In terms of processing, the N-terminal D-lactate is probably produced by dehydration of Ser-25 by ElxB, followed by proteolytic removal of the leader peptide by the serine protease ElxP and hydrolysis of the resulting new N-terminal dehydroalanine. This hydrolysis may occur spontaneously. The pyruvate group thus formed is reduced to D-lactate by the NADPH-dependent oxidoreductase ElxO. This N-terminal D-lactate protects the lantibiotic against degradation against aminopeptidase.

Functionally, lanthionine-containing peptide antibiotic (lantibiotic) active on Gram-positive bacteria such as staphylococci, enterococci and streptococci. The bactericidal activity of lantibiotics is based on depolarization of energized bacterial cytoplasmic membranes, initiated by the formation of aqueous transmembrane pores. In Staphylococcus epidermidis, this protein is Lantibiotic epilancin (elkA).